Consider the following 451-residue polypeptide: tRNA modification GTPase MnmE (451 aa).

Arg-25, Glu-87, and Arg-127 together coordinate (6S)-5-formyl-5,6,7,8-tetrahydrofolate. Residues 222-374 (GLRVALVGRP…FVQVLLERCG (153 aa)) enclose the TrmE-type G domain. A K(+)-binding site is contributed by Asn-232. Residues 232-237 (NVGKSS), 251-257 (TELPGTT), and 276-279 (DTAG) each bind GTP. Ser-236 contacts Mg(2+). 3 residues coordinate K(+): Thr-251, Leu-253, and Thr-256. A Mg(2+)-binding site is contributed by Thr-257. Lys-451 is a binding site for (6S)-5-formyl-5,6,7,8-tetrahydrofolate.

The protein belongs to the TRAFAC class TrmE-Era-EngA-EngB-Septin-like GTPase superfamily. TrmE GTPase family. Homodimer. Heterotetramer of two MnmE and two MnmG subunits. K(+) is required as a cofactor.

The protein localises to the cytoplasm. Exhibits a very high intrinsic GTPase hydrolysis rate. Involved in the addition of a carboxymethylaminomethyl (cmnm) group at the wobble position (U34) of certain tRNAs, forming tRNA-cmnm(5)s(2)U34. This is tRNA modification GTPase MnmE from Synechococcus sp. (strain CC9902).